The sequence spans 115 residues: Putative membrane protein insertion efficiency factor (115 aa).

Positions 81–115 (DPRPGRCGCKDAGPAVSAGSTEGNPGRRTDGTDPD) are disordered. A compositionally biased stretch (basic and acidic residues) spans 105–115 (PGRRTDGTDPD).

Belongs to the UPF0161 family.

Its subcellular location is the cell inner membrane. Its function is as follows. Could be involved in insertion of integral membrane proteins into the membrane. This is Putative membrane protein insertion efficiency factor from Rhodospirillum rubrum (strain ATCC 11170 / ATH 1.1.1 / DSM 467 / LMG 4362 / NCIMB 8255 / S1).